Reading from the N-terminus, the 162-residue chain is NADH-quinone oxidoreductase subunit I (162 aa).

2 4Fe-4S ferredoxin-type domains span residues 53–83 (LRRY…IEAE) and 93–122 (TRYD…EGPN). The [4Fe-4S] cluster site is built by C63, C66, C69, C73, C102, C105, C108, and C112.

This sequence belongs to the complex I 23 kDa subunit family. NDH-1 is composed of 14 different subunits. Subunits NuoA, H, J, K, L, M, N constitute the membrane sector of the complex. Requires [4Fe-4S] cluster as cofactor.

The protein localises to the cell inner membrane. It carries out the reaction a quinone + NADH + 5 H(+)(in) = a quinol + NAD(+) + 4 H(+)(out). NDH-1 shuttles electrons from NADH, via FMN and iron-sulfur (Fe-S) centers, to quinones in the respiratory chain. The immediate electron acceptor for the enzyme in this species is believed to be ubiquinone. Couples the redox reaction to proton translocation (for every two electrons transferred, four hydrogen ions are translocated across the cytoplasmic membrane), and thus conserves the redox energy in a proton gradient. The polypeptide is NADH-quinone oxidoreductase subunit I (Granulibacter bethesdensis (strain ATCC BAA-1260 / CGDNIH1)).